Consider the following 235-residue polypeptide: Segregation and condensation protein A (235 aa).

It belongs to the ScpA family. As to quaternary structure, component of a cohesin-like complex composed of ScpA, ScpB and the Smc homodimer, in which ScpA and ScpB bind to the head domain of Smc. The presence of the three proteins is required for the association of the complex with DNA.

The protein localises to the cytoplasm. Its function is as follows. Participates in chromosomal partition during cell division. May act via the formation of a condensin-like complex containing Smc and ScpB that pull DNA away from mid-cell into both cell halves. This Streptococcus equi subsp. zooepidemicus (strain H70) protein is Segregation and condensation protein A.